The chain runs to 460 residues: Ribosomal protein uS12 methylthiotransferase RimO (460 aa).

Residues 9 to 119 form the MTTase N-terminal domain; that stretch reads PKVGFVSLGC…VMEAVHAALP (111 aa). The [4Fe-4S] cluster site is built by Cys-18, Cys-54, Cys-83, Cys-150, Cys-154, and Cys-157. A Radical SAM core domain is found at 136-374; it reads LTPRHYAYLK…AKQAEISALR (239 aa). The region spanning 376–444 is the TRAM domain; it reads EAKIGSVQQC…EHDLFGDALP (69 aa).

Belongs to the methylthiotransferase family. RimO subfamily. [4Fe-4S] cluster serves as cofactor.

Its subcellular location is the cytoplasm. It catalyses the reaction L-aspartate(89)-[ribosomal protein uS12]-hydrogen + (sulfur carrier)-SH + AH2 + 2 S-adenosyl-L-methionine = 3-methylsulfanyl-L-aspartate(89)-[ribosomal protein uS12]-hydrogen + (sulfur carrier)-H + 5'-deoxyadenosine + L-methionine + A + S-adenosyl-L-homocysteine + 2 H(+). Catalyzes the methylthiolation of an aspartic acid residue of ribosomal protein uS12. This chain is Ribosomal protein uS12 methylthiotransferase RimO, found in Xanthomonas oryzae pv. oryzae (strain PXO99A).